Consider the following 159-residue polypeptide: Transcriptional repressor NrdR (159 aa).

Residues 1-11 show a composition bias toward polar residues; that stretch reads MQCPTCQNTDS. The segment at 1 to 21 is disordered; sequence MQCPTCQNTDSRVLESRSADS. The segment at 3-34 is a zinc-finger region; the sequence is CPTCQNTDSRVLESRSADSGKSVRRRRECLNC. Residues 49–139 enclose the ATP-cone domain; the sequence is VSVMKKDGSR…VYRKFNGVKD (91 aa).

The protein belongs to the NrdR family. Requires Zn(2+) as cofactor.

Functionally, negatively regulates transcription of bacterial ribonucleotide reductase nrd genes and operons by binding to NrdR-boxes. In Prochlorococcus marinus (strain MIT 9215), this protein is Transcriptional repressor NrdR.